A 122-amino-acid chain; its full sequence is Zein-alpha B49 (122 aa).

It belongs to the zein family.

Zeins are major seed storage proteins. This Zea mays (Maize) protein is Zein-alpha B49.